The chain runs to 195 residues: Xanthine phosphoribosyltransferase (195 aa).

Residues Leu-20 and Asn-27 each contribute to the xanthine site. Residue Ala-128 to Ala-132 participates in 5-phospho-alpha-D-ribose 1-diphosphate binding. Residue Lys-156 coordinates xanthine.

Belongs to the purine/pyrimidine phosphoribosyltransferase family. Xpt subfamily. In terms of assembly, homodimer.

The protein resides in the cytoplasm. It carries out the reaction XMP + diphosphate = xanthine + 5-phospho-alpha-D-ribose 1-diphosphate. It functions in the pathway purine metabolism; XMP biosynthesis via salvage pathway; XMP from xanthine: step 1/1. Converts the preformed base xanthine, a product of nucleic acid breakdown, to xanthosine 5'-monophosphate (XMP), so it can be reused for RNA or DNA synthesis. The protein is Xanthine phosphoribosyltransferase of Lactiplantibacillus plantarum (strain ATCC BAA-793 / NCIMB 8826 / WCFS1) (Lactobacillus plantarum).